The primary structure comprises 197 residues: Lactoylglutathione lyase-like protein terB (197 aa).

Positions 1-19 (MARFAVLQLLLPLAAGLTG) are cleaved as a signal peptide. 3 N-linked (GlcNAc...) asparagine glycosylation sites follow: Asn-82, Asn-99, and Asn-140.

It belongs to the glyoxalase I family.

Functionally, lactoylglutathione lyase-like protein; part of the gene cluster that mediates the biosynthesis of terrein, a fungal metabolite with ecological, antimicrobial, antiproliferative, and antioxidative activities. The first step in the pathway is performed by the polyketide synthase terA that produces 4-hydroxy-6-methylpyranon (4-HMP), orsellinic acid (OA), and 2,3-dehydro-6-hydroxymellein (2,3-dehydro-6-HM) by condensing acetyl-CoA with two, three, or four malonyl-CoA units, respectively. 4-HMP and OA are not pathway intermediates, but are rather shunt or side products. 2,3-dehydro-6-HM is further converted to 6-hydroxymellein (6-HM) by the 6-hydroxymellein synthase terB. The monooxygenases terC and terD, the multicopper oxidase terE and the Kelch-like protein terF are then involved in the transformation of 6-HM to terrein. Even if they are co-regulated with the other terrein cluster genes, terH and terI seem to be dispensable for terrein production; whereas one or both of the 2 transporters terG and terJ are probably required for efficient secretion of metabolites. The polypeptide is Lactoylglutathione lyase-like protein terB (Aspergillus terreus (strain NIH 2624 / FGSC A1156)).